The sequence spans 204 residues: Cytochrome c biogenesis ATP-binding export protein CcmA (204 aa).

The ABC transporter domain maps to 2–204 (IEVRDLGVSR…LDAEDLGGFL (203 aa)). 34-41 (GPNGIGKT) contacts ATP.

It belongs to the ABC transporter superfamily. CcmA exporter (TC 3.A.1.107) family. In terms of assembly, the complex is composed of two ATP-binding proteins (CcmA) and two transmembrane proteins (CcmB).

It localises to the cell inner membrane. The catalysed reaction is heme b(in) + ATP + H2O = heme b(out) + ADP + phosphate + H(+). Functionally, part of the ABC transporter complex CcmAB involved in the biogenesis of c-type cytochromes; once thought to export heme, this seems not to be the case, but its exact role is uncertain. Responsible for energy coupling to the transport system. In Ruegeria sp. (strain TM1040) (Silicibacter sp.), this protein is Cytochrome c biogenesis ATP-binding export protein CcmA.